The following is a 118-amino-acid chain: Basic phospholipase A2 PA-11 (118 aa).

Disulfide bonds link Cys-11-Cys-71, Cys-27-Cys-117, Cys-29-Cys-45, Cys-44-Cys-98, Cys-51-Cys-91, Cys-60-Cys-84, and Cys-78-Cys-89. Residues Tyr-28, Gly-30, and Gly-32 each contribute to the Ca(2+) site. His-48 is a catalytic residue. Residue Asp-49 participates in Ca(2+) binding. The active site involves Asp-92.

This sequence belongs to the phospholipase A2 family. Group I subfamily. D49 sub-subfamily. The cofactor is Ca(2+). Expressed by the venom gland.

The protein resides in the secreted. It carries out the reaction a 1,2-diacyl-sn-glycero-3-phosphocholine + H2O = a 1-acyl-sn-glycero-3-phosphocholine + a fatty acid + H(+). In terms of biological role, PLA2 catalyzes the calcium-dependent hydrolysis of the 2-acyl groups in 3-sn-phosphoglycerides. The polypeptide is Basic phospholipase A2 PA-11 (Pseudechis australis (Mulga snake)).